Here is a 266-residue protein sequence, read N- to C-terminus: tRNA pseudouridine synthase A (266 aa).

D53 serves as the catalytic Nucleophile. Residue Y109 participates in substrate binding.

Belongs to the tRNA pseudouridine synthase TruA family.

It carries out the reaction uridine(38/39/40) in tRNA = pseudouridine(38/39/40) in tRNA. In terms of biological role, formation of pseudouridine at positions 38, 39 and 40 in the anticodon stem and loop of transfer RNAs. This Methanocella arvoryzae (strain DSM 22066 / NBRC 105507 / MRE50) protein is tRNA pseudouridine synthase A.